The chain runs to 124 residues: Seripauperin-15 (124 aa).

An N-terminal signal peptide occupies residues 1–20 (MVKLTSIAAGVAAIAAGVAA).

Belongs to the SRP1/TIP1 family. Seripauperin subfamily.

This chain is Seripauperin-15 (PAU15), found in Saccharomyces cerevisiae (strain ATCC 204508 / S288c) (Baker's yeast).